The primary structure comprises 307 residues: Ribonuclease Z (307 aa).

Zn(2+) contacts are provided by histidine 63, histidine 65, aspartate 67, histidine 68, histidine 141, aspartate 208, and histidine 266. Aspartate 67 serves as the catalytic Proton acceptor.

This sequence belongs to the RNase Z family. Homodimer. Zn(2+) is required as a cofactor.

The catalysed reaction is Endonucleolytic cleavage of RNA, removing extra 3' nucleotides from tRNA precursor, generating 3' termini of tRNAs. A 3'-hydroxy group is left at the tRNA terminus and a 5'-phosphoryl group is left at the trailer molecule.. Its function is as follows. Zinc phosphodiesterase, which displays some tRNA 3'-processing endonuclease activity. Probably involved in tRNA maturation, by removing a 3'-trailer from precursor tRNA. The chain is Ribonuclease Z from Chlamydia pneumoniae (Chlamydophila pneumoniae).